The following is a 356-amino-acid chain: Acyl-coenzyme A diphosphatase NUDT19 (356 aa).

In terms of domain architecture, Nudix hydrolase spans 10–241; it reads AATVMLAAGW…IWLAPPQFYE (232 aa). The interval 72 to 94 is disordered; sequence PRFGLGPEPPRQPPFPGLSHGDA. A compositionally biased stretch (pro residues) spans 78 to 87; that stretch reads PEPPRQPPFP. The short motif at 97-118 is the Nudix box element; it reads AALPDDVALRICAIRETFEEAG. Mg(2+)-binding residues include Glu-112 and Glu-116. N6-succinyllysine is present on Lys-299. Residues 354–356 carry the Microbody targeting signal motif; the sequence is ARL.

The protein belongs to the Nudix hydrolase family. As to quaternary structure, monomer. The cofactor is Mg(2+). Mn(2+) serves as cofactor.

It localises to the peroxisome. The enzyme catalyses an acyl-CoA + H2O = an acyl-4'-phosphopantetheine + adenosine 3',5'-bisphosphate + 2 H(+). It catalyses the reaction CoA + H2O = (R)-4'-phosphopantetheine + adenosine 3',5'-bisphosphate + 2 H(+). It carries out the reaction hexanoyl-CoA + H2O = hexanoyl-4'-phosphopantetheine + adenosine 3',5'-bisphosphate + 2 H(+). The catalysed reaction is octanoyl-CoA + H2O = S-octanoyl-4'-phosphopantetheine + adenosine 3',5'-bisphosphate + 2 H(+). The enzyme catalyses butanoyl-CoA + H2O = S-butanoyl-4'-phosphopantetheine + adenosine 3',5'-bisphosphate + 2 H(+). It catalyses the reaction propanoyl-CoA + H2O = propanoyl-4'-phosphopantetheine + adenosine 3',5'-bisphosphate + 2 H(+). It carries out the reaction malonyl-CoA + H2O = malonyl-4'-phosphopantetheine + adenosine 3',5'-bisphosphate + 2 H(+). The catalysed reaction is succinyl-CoA + H2O = succinyl-4'-phosphopantetheine + adenosine 3',5'-bisphosphate + 2 H(+). The enzyme catalyses choloyl-CoA + H2O = S-choloyl-4'-phosphopantetheine + adenosine 3',5'-bisphosphate + 2 H(+). It catalyses the reaction 4,8-dimethylnonanoyl-CoA + H2O = S-(4,8-dimethylnonanoyl)-4'-phosphopantetheine + adenosine 3',5'-bisphosphate + 2 H(+). It carries out the reaction (9Z,12Z,15Z)-octadecatrienoyl-CoA + H2O = S-(9Z,12Z,15Z-octadecatrienoyl)-4'-phosphopantetheine + adenosine 3',5'-bisphosphate + 2 H(+). The catalysed reaction is (9Z,12Z)-octadecadienoyl-CoA + H2O = S-(9Z,12Z-octadecadienoyl)-4'-phosphopantetheine + adenosine 3',5'-bisphosphate + 2 H(+). The enzyme catalyses (9Z)-hexadecenoyl-CoA + H2O = S-(9Z-hexadecenoyl)-4'-phosphopantetheine + adenosine 3',5'-bisphosphate + 2 H(+). It catalyses the reaction (9Z)-tetradecenoyl-CoA + H2O = S-(9Z-tetradecenoyl)-4'-phosphopantetheine + adenosine 3',5'-bisphosphate + 2 H(+). It carries out the reaction (6Z)-octenoyl-CoA + H2O = S-(6Z-octenoyl)-4'-phosphopantetheine + adenosine 3',5'-bisphosphate + 2 H(+). The catalysed reaction is hexadecanoyl-CoA + H2O = S-hexadecanoyl-4'-phosphopantetheine + adenosine 3',5'-bisphosphate + 2 H(+). The enzyme catalyses tetradecanoyl-CoA + H2O = tetradecanoyl-4'-phosphopantetheine + adenosine 3',5'-bisphosphate + 2 H(+). It catalyses the reaction dodecanoyl-CoA + H2O = S-dodecanoyl-4'-phosphopantetheine + adenosine 3',5'-bisphosphate + 2 H(+). It carries out the reaction a 5'-end CoA-ribonucleoside in mRNA + H2O = a 5'-end phospho-adenosine-phospho-ribonucleoside in mRNA + (R)-4'-phosphopantetheine + 2 H(+). Functionally, fatty acyl-coenzyme A (CoA) diphosphatase that hydrolyzes fatty acyl-CoA to yield acyl-4'-phosphopantetheine and adenosine 3',5'-bisphosphate. Mediates the hydrolysis of a wide range of CoA esters, including choloyl-CoA and branched-chain fatty-acyl-CoA esters and at low substrate concentrations medium and long-chain fatty-acyl-CoA esters are the primary substrates. Highest activity seen with medium-chain acyl-CoA esters and higher rates of activity seen with the unsaturated acyl-CoA esters compared with the saturated esters. Exhibits decapping activity towards dpCoA-capped RNAs in vitro. This is Acyl-coenzyme A diphosphatase NUDT19 (Nudt19) from Mus saxicola (Brown spiny mouse).